We begin with the raw amino-acid sequence, 266 residues long: Short-chain dehydrogenase/reductase AacuF (266 aa).

The NADP(+) site is built by L13, D57, and N85. Catalysis depends on proton donor residues S145 and Y164. Positions 164, 168, and 198 each coordinate NADP(+). Catalysis depends on K168, which acts as the Lowers pKa of active site Tyr.

This sequence belongs to the short-chain dehydrogenases/reductases (SDR) family.

Its pathway is secondary metabolite biosynthesis. Short-chain dehydrogenase/reductase; part of the gene cluster that mediates the biosynthesis of the tetrahydroxanthone dimer secalonic acid D. The pathway begins with the synthesis of atrochrysone thioester by the polyketide synthase AacuL. The atrochrysone carboxyl ACP thioesterase AacuM then breaks the thioester bond and releases the atrochrysone carboxylic acid from AacuL. Atrochrysone carboxylic acid is decarboxylated by the decarboxylase AacuI, and oxidized by the anthrone oxygenase AacuG to yield emodin. Emodin is then reduced to emodin hydroquinone by a yet unidentified oxidoreductase. A-ring reduction by the short chain dehydrogenase AacuN, dehydration by the scytalone dehydratase-like protein AacuK and probable spontaneous re-oxidation, results in overall deoxygenation to chrysophanol. Baeyer-Villiger oxidation by the Baeyer-Villiger monooxygenase (BVMO) AacuH then yields monodictyphenone. Monodictyphenone is transformed into compounds with the tetrahydroxanthone skeleton via methylesterification by the methyltransferase AacuQ, followed by the action of the flavin-dependent monooxygenase AacuC, the isomerase AacuP, and the short chain dehydrogenase/reductase AacuF or AacuD. AacuF and AacuD should accept the same compound as a substrate but perform the ketoreduction with a different stereoselectivity, thus yielding blennolides B and A, respectively. In the final step of the biosynthesis, the cytochrome P450 monooxygenase AacuE accepts blennolide B and/or blennolide A to conduct the dimerization reaction to furnish the tetrahydroxanthone dimers, secalonic acids D, B, and F. The protein is Short-chain dehydrogenase/reductase AacuF of Aspergillus aculeatus (strain ATCC 16872 / CBS 172.66 / WB 5094).